The sequence spans 568 residues: Keratin, type I cytoskeletal 10 (568 aa).

Residues 1-15 show a composition bias toward low complexity; that stretch reads MSVRYSSSKQYSSSR. Residues 1-31 form a disordered region; that stretch reads MSVRYSSSKQYSSSRSGGGGGGGGGSSFRIS. The tract at residues 1 to 135 is head; it reads MSVRYSSSKQ…GGDGGLLSGN (135 aa). Serine 14, serine 16, serine 36, serine 47, serine 50, and serine 160 each carry phosphoserine. Over residues 16 to 26 the composition is skewed to gly residues; the sequence is SGGGGGGGGGS. Residues 136-171 are coil 1A; sequence EKVTMQNLNDRLASYLDKVRALEESNYELEGKIKEW. The 315-residue stretch at 136–450 folds into the IF rod domain; sequence EKVTMQNLND…SLLEGEGSSG (315 aa). The linker 1 stretch occupies residues 172–192; the sequence is YEKHGNSSQRAPRDYSKYYQT. The coil 1B stretch occupies residues 193-284; the sequence is IEDLKNQILN…KNHEEEMRDL (92 aa). Residues 285 to 307 are linker 12; that stretch reads QNVSTGDVNVEMNAAPGVDLTEL. Positions 308 to 446 are coil 2; that stretch reads LNNMRNQYEQ…QTYRSLLEGE (139 aa). The segment at 447-568 is tail; sequence GSSGGGGYGG…GESSSKGPRY (122 aa). The segment covering 485 to 546 has biased composition (gly residues); that stretch reads GGGSSGGGGH…GGGYGGGSSS (62 aa). The tract at residues 485 to 568 is disordered; sequence GGGSSGGGGH…GESSSKGPRY (84 aa). Low complexity predominate over residues 547 to 568; it reads SGGHKSSSSGSVGESSSKGPRY.

The protein belongs to the intermediate filament family. As to quaternary structure, heterotetramer of two type I and two type II keratins. Heterodimer with KRT1. Two heterodimers of KRT1 and KRT10 form a heterotetramer. The KRT10 subunit in the heterotetramer is probably disulfide-linked. Expressed in skin.

The protein localises to the secreted. It localises to the extracellular space. The protein resides in the cell surface. It is found in the cytoplasm. Functionally, plays a role in the establishment of the epidermal barrier on plantar skin. Involved in the maintenance of cell layer development and keratin filament bundles in suprabasal cells of the epithelium. The polypeptide is Keratin, type I cytoskeletal 10 (Canis lupus familiaris (Dog)).